Reading from the N-terminus, the 417-residue chain is Tyrosine--tRNA ligase (417 aa).

Position 39 (Tyr-39) interacts with L-tyrosine. Residues 44-53 (ATATSLHIGN) carry the 'HIGH' region motif. Tyr-176 and Gln-180 together coordinate L-tyrosine. Residues 236 to 240 (KMGKS) carry the 'KMSKS' region motif. Lys-239 contacts ATP. Residues 350-416 (IGILSLLVTA…GKKKHVLVRP (67 aa)) form the S4 RNA-binding domain.

Belongs to the class-I aminoacyl-tRNA synthetase family. TyrS type 1 subfamily. In terms of assembly, homodimer.

The protein resides in the cytoplasm. The enzyme catalyses tRNA(Tyr) + L-tyrosine + ATP = L-tyrosyl-tRNA(Tyr) + AMP + diphosphate + H(+). In terms of biological role, catalyzes the attachment of tyrosine to tRNA(Tyr) in a two-step reaction: tyrosine is first activated by ATP to form Tyr-AMP and then transferred to the acceptor end of tRNA(Tyr). This is Tyrosine--tRNA ligase from Mesorhizobium japonicum (strain LMG 29417 / CECT 9101 / MAFF 303099) (Mesorhizobium loti (strain MAFF 303099)).